We begin with the raw amino-acid sequence, 186 residues long: Threonylcarbamoyl-AMP synthase (186 aa).

A YrdC-like domain is found at 6–186 (GFRLRLAANA…FDAMSGRRIR (181 aa)).

The protein belongs to the SUA5 family. TsaC subfamily.

Its subcellular location is the cytoplasm. The catalysed reaction is L-threonine + hydrogencarbonate + ATP = L-threonylcarbamoyladenylate + diphosphate + H2O. Required for the formation of a threonylcarbamoyl group on adenosine at position 37 (t(6)A37) in tRNAs that read codons beginning with adenine. Catalyzes the conversion of L-threonine, HCO(3)(-)/CO(2) and ATP to give threonylcarbamoyl-AMP (TC-AMP) as the acyladenylate intermediate, with the release of diphosphate. In Methylococcus capsulatus (strain ATCC 33009 / NCIMB 11132 / Bath), this protein is Threonylcarbamoyl-AMP synthase.